A 277-amino-acid chain; its full sequence is NADPH-dependent 7-cyano-7-deazaguanine reductase (277 aa).

Substrate is bound at residue 83–85 (IES). Residue 85 to 86 (SK) participates in NADPH binding. C184 (thioimide intermediate) is an active-site residue. D191 (proton donor) is an active-site residue. 223–224 (HE) is a substrate binding site. 252–253 (RG) is an NADPH binding site.

This sequence belongs to the GTP cyclohydrolase I family. QueF type 2 subfamily. As to quaternary structure, homodimer.

The protein localises to the cytoplasm. It carries out the reaction 7-aminomethyl-7-carbaguanine + 2 NADP(+) = 7-cyano-7-deazaguanine + 2 NADPH + 3 H(+). It functions in the pathway tRNA modification; tRNA-queuosine biosynthesis. Functionally, catalyzes the NADPH-dependent reduction of 7-cyano-7-deazaguanine (preQ0) to 7-aminomethyl-7-deazaguanine (preQ1). The polypeptide is NADPH-dependent 7-cyano-7-deazaguanine reductase (Cupriavidus pinatubonensis (strain JMP 134 / LMG 1197) (Cupriavidus necator (strain JMP 134))).